The primary structure comprises 122 residues: ATP-dependent Clp protease adapter protein ClpS (122 aa).

Belongs to the ClpS family. In terms of assembly, binds to the N-terminal domain of the chaperone ClpA.

Functionally, involved in the modulation of the specificity of the ClpAP-mediated ATP-dependent protein degradation. This Pseudomonas fluorescens (strain SBW25) protein is ATP-dependent Clp protease adapter protein ClpS.